We begin with the raw amino-acid sequence, 217 residues long: Yop proteins translocation protein R (217 aa).

4 consecutive transmembrane segments (helical) span residues 11–31 (IIVL…TSFV), 53–73 (MAMY…VGFA), 157–177 (IGFL…NILL), and 181–201 (MMMV…FVLL).

Belongs to the FliP/MopC/SpaP family.

The protein localises to the cell membrane. In terms of biological role, component of the yop secretion machinery. May have a role in the negative pathway regulation of yop expression controlled by calcium. The chain is Yop proteins translocation protein R (yscR) from Yersinia pestis.